Here is a 285-residue protein sequence, read N- to C-terminus: Energy-coupling factor transporter ATP-binding protein EcfA2 (285 aa).

The region spanning 6 to 242 is the ABC transporter domain; the sequence is LKVEELNYNY…KEVIRKVNLR (237 aa). 39-46 is an ATP binding site; sequence GGNGVGKS.

Belongs to the ABC transporter superfamily. Energy-coupling factor EcfA family. In terms of assembly, forms a stable energy-coupling factor (ECF) transporter complex composed of 2 membrane-embedded substrate-binding proteins (S component), 2 ATP-binding proteins (A component) and 2 transmembrane proteins (T component).

Its subcellular location is the cell membrane. In terms of biological role, ATP-binding (A) component of a common energy-coupling factor (ECF) ABC-transporter complex. Unlike classic ABC transporters this ECF transporter provides the energy necessary to transport a number of different substrates. The polypeptide is Energy-coupling factor transporter ATP-binding protein EcfA2 (Clostridium perfringens (strain SM101 / Type A)).